The chain runs to 353 residues: Rhodopsin (353 aa).

Topologically, residues 1-36 are extracellular; the sequence is MNGTEGDNFYVPFSNKTGLARSPYEYPQYYLAEPWK. N2 and N15 each carry an N-linked (GlcNAc...) asparagine glycan. Residues 37 to 61 form a helical membrane-spanning segment; it reads YSALAAYMFFLILVGFPVNFLTLFV. Over 62-73 the chain is Cytoplasmic; sequence TVQHKKLRTPLN. A helical transmembrane segment spans residues 74 to 96; sequence YILLNLAMANLFMVLFGFTVTMY. At 97 to 110 the chain is on the extracellular side; that stretch reads TSMNGYFVFGPTMC. C110 and C187 form a disulfide bridge. A helical membrane pass occupies residues 111–133; that stretch reads SIEGFFATLGGEVALWSLVVLAI. A 'Ionic lock' involved in activated form stabilization motif is present at residues 134–136; the sequence is ERY. The Cytoplasmic segment spans residues 134–152; that stretch reads ERYIVICKPMGNFRFGNTH. The chain crosses the membrane as a helical span at residues 153-173; the sequence is AIMGVAFTWIMALACAAPPLV. The Extracellular segment spans residues 174-202; sequence GWSRYIPEGMQCSCGPDYYTLNPNFNNES. A helical transmembrane segment spans residues 203–224; the sequence is YVVYMFVVHFLVPFVIIFFCYG. Residues 225 to 252 lie on the Cytoplasmic side of the membrane; the sequence is RLLCTVKEAAAAQQESASTQKAEKEVTR. Residues 253–274 form a helical membrane-spanning segment; the sequence is MVVLMVIGFLVCWVPYASVAFY. Residues 275 to 286 are Extracellular-facing; it reads IFTHQGSDFGAT. A helical transmembrane segment spans residues 287-308; sequence FMTLPAFFAKSSALYNPVIYIL. The residue at position 296 (K296) is an N6-(retinylidene)lysine. Topologically, residues 309 to 353 are cytoplasmic; that stretch reads MNKQFRNCMITTLCCGKNPLGDDESGASTSKTEVSSVSTSPVSPA. Residues 330-353 form a disordered region; sequence DDESGASTSKTEVSSVSTSPVSPA. The segment covering 336–353 has biased composition (low complexity); the sequence is STSKTEVSSVSTSPVSPA.

Belongs to the G-protein coupled receptor 1 family. Opsin subfamily. Post-translationally, phosphorylated on some or all of the serine and threonine residues present in the C-terminal region. Contains one covalently linked retinal chromophore. Short photoreceptor cells.

The protein localises to the membrane. The protein resides in the cell projection. It is found in the cilium. Its subcellular location is the photoreceptor outer segment. Functionally, photoreceptor required for image-forming vision at low light intensity. While most salt water fish species use retinal as chromophore, most freshwater fish use 3-dehydroretinal, or a mixture of retinal and 3-dehydroretinal. Light-induced isomerization of 11-cis to all-trans retinal triggers a conformational change that activates signaling via G-proteins. Subsequent receptor phosphorylation mediates displacement of the bound G-protein alpha subunit by arrestin and terminates signaling. In Lethenteron camtschaticum (Japanese lamprey), this protein is Rhodopsin (RHO).